Consider the following 415-residue polypeptide: uncharacterized protein (415 aa).

In terms of domain architecture, TRAM spans 1–52; the sequence is MQDLTINAIGAQGDGLARTADGKPAFVPLTLPGEVVRAKMDGARGEVVEILA. Residues Cys62, Cys68, Cys71, and Cys147 each contribute to the [4Fe-4S] cluster site. S-adenosyl-L-methionine contacts are provided by Gln252, Tyr279, Glu299, and Asp347. Residue Cys373 is the Nucleophile of the active site.

This sequence belongs to the class I-like SAM-binding methyltransferase superfamily. RNA M5U methyltransferase family.

This is an uncharacterized protein from Caulobacter vibrioides (strain ATCC 19089 / CIP 103742 / CB 15) (Caulobacter crescentus).